The following is a 671-amino-acid chain: Protein KHNYN (671 aa).

Disordered stretches follow at residues 234-274, 294-327, 344-402, and 577-626; these read RVAG…LSGE, EVAP…AHVP, HNGS…GGNL, and GPTL…RKTR. Basic and acidic residues predominate over residues 250–272; it reads TVEKEERKQDAVRDMGSGRKELS. Residues 351–365 are compositionally biased toward pro residues; sequence PRVPSPPPAPEPPWP. The residue at position 355 (Ser355) is a Phosphoserine. Residues 367 to 381 are compositionally biased toward basic and acidic residues; that stretch reads GDRDRDRDRGDRGDK. Residues 430–582 enclose the RNase NYN domain; sequence LRHIVIDGSN…LGRNGPTLDE (153 aa). The segment covering 591 to 612 has biased composition (polar residues); the sequence is QGSSKTQQPSKGSTEQANQQQG.

It belongs to the N4BP1 family.

In Mus musculus (Mouse), this protein is Protein KHNYN (Khnyn).